Here is a 260-residue protein sequence, read N- to C-terminus: Acidic leucine-rich nuclear phosphoprotein 32 family member E (260 aa).

Residue Met1 is modified to N-acetylmethionine. LRR repeat units follow at residues Glu18 to Asn38, Glu43 to Asn64, Lys65 to Cys87, and Asn89 to Gln110. A Glycyl lysine isopeptide (Lys-Gly) (interchain with G-Cter in SUMO2) cross-link involves residue Lys68. In terms of domain architecture, LRRCT spans Cys123–Glu161. Composition is skewed to acidic residues over residues Asp149 to Val208 and Ile218 to Glu240. A disordered region spans residues Asp149–Asp260. A ZID domain region spans residues Glu207 to Asp260. A compositionally biased stretch (basic and acidic residues) spans Gly241 to Ala251.

This sequence belongs to the ANP32 family. Component of a SWR1-like complex, composed of EP400, KAT5/TIP60, TRRAP, BRD8, RUVBL1, RUVBL2, ING3 and ANP32E; the complex does not contain SRCAP. Interacts with H2A.Z/H2AZ1. Interacts with the importin alpha KPNA1 and KPNA2. In terms of processing, phosphorylated. The phosphorylation is nuclear localization signal (NLS)-dependent. As to expression, expressed at highest levels in cerebellum and spleen. In the cerebellum, expressed mainly in granule cells and, to a lesser extent, in Purkinje cells.

Its subcellular location is the cytoplasm. It is found in the nucleus. Histone chaperone that specifically mediates the genome-wide removal of histone H2A.Z/H2AZ1 from the nucleosome: removes H2A.Z/H2AZ1 from its normal sites of deposition, especially from enhancer and insulator regions. Not involved in deposition of H2A.Z/H2AZ1 in the nucleosome. May stabilize the evicted H2A.Z/H2AZ1-H2B dimer, thus shifting the equilibrium towards dissociation and the off-chromatin state. Inhibits activity of protein phosphatase 2A (PP2A). Does not inhibit protein phosphatase 1. May play a role in cerebellar development and synaptogenesis. In Mus musculus (Mouse), this protein is Acidic leucine-rich nuclear phosphoprotein 32 family member E (Anp32e).